Here is a 130-residue protein sequence, read N- to C-terminus: Small ribosomal subunit protein uS8 (130 aa).

It belongs to the universal ribosomal protein uS8 family. As to quaternary structure, part of the 30S ribosomal subunit. Contacts proteins S5 and S12.

One of the primary rRNA binding proteins, it binds directly to 16S rRNA central domain where it helps coordinate assembly of the platform of the 30S subunit. The chain is Small ribosomal subunit protein uS8 from Buchnera aphidicola subsp. Schizaphis graminum (strain Sg).